A 103-amino-acid chain; its full sequence is N(4)-acetylcytidine amidohydrolase (103 aa).

Residues Thr-6 to Glu-92 form the ASCH domain. Residue Lys-20 is the Proton acceptor of the active site. The active-site Nucleophile is the Thr-23. Glu-73 acts as the Proton donor in catalysis.

The protein belongs to the N(4)-acetylcytidine amidohydrolase family.

It catalyses the reaction N(4)-acetylcytidine + H2O = cytidine + acetate + H(+). It carries out the reaction N(4)-acetyl-2'-deoxycytidine + H2O = 2'-deoxycytidine + acetate + H(+). The catalysed reaction is N(4)-acetylcytosine + H2O = cytosine + acetate + H(+). In terms of biological role, catalyzes the hydrolysis of N(4)-acetylcytidine (ac4C). This is N(4)-acetylcytidine amidohydrolase from Shewanella sp. (strain MR-7).